Reading from the N-terminus, the 849-residue chain is Alanine--tRNA ligase (849 aa).

Residues His551, His555, Cys653, and His657 each coordinate Zn(2+).

This sequence belongs to the class-II aminoacyl-tRNA synthetase family. Zn(2+) serves as cofactor.

The protein resides in the cytoplasm. It carries out the reaction tRNA(Ala) + L-alanine + ATP = L-alanyl-tRNA(Ala) + AMP + diphosphate. Catalyzes the attachment of alanine to tRNA(Ala) in a two-step reaction: alanine is first activated by ATP to form Ala-AMP and then transferred to the acceptor end of tRNA(Ala). Also edits incorrectly charged Ser-tRNA(Ala) and Gly-tRNA(Ala) via its editing domain. The chain is Alanine--tRNA ligase from Sulfurimonas denitrificans (strain ATCC 33889 / DSM 1251) (Thiomicrospira denitrificans (strain ATCC 33889 / DSM 1251)).